Consider the following 416-residue polypeptide: Calreticulin (416 aa).

Positions 1 to 25 (MENRGRNPSFLSLLLLLSLFAIASA) are cleaved as a signal peptide. Asn-57 is a glycosylation site (N-linked (GlcNAc...) asparagine). Cys-111 and Cys-143 form a disulfide bridge. The an alpha-D-glucoside site is built by Tyr-115, Lys-117, Tyr-134, and Asp-141. Asn-157 carries N-linked (GlcNAc...) asparagine glycosylation. 7 consecutive repeat copies span residues 197–208 (KQTGSLYTDWDL), 216–227 (DPEAKKPEDWDD), 233–244 (DPEDKKPEGYDD), 251–262 (DPEAKKPEDWDD), 266–276 (GEWTAPTIPNP), 280–290 (GPWKAKKIKNP), and 294–304 (GKWKAPMIDNP). The segment at 197-262 (KQTGSLYTDW…EAKKPEDWDD (66 aa)) is 4 X approximate repeats. The segment covering 217–241 (PEAKKPEDWDDKEFIPDPEDKKPEG) has biased composition (basic and acidic residues). The interval 217–281 (PEAKKPEDWD…TIPNPEYKGP (65 aa)) is disordered. The tract at residues 266 to 304 (GEWTAPTIPNPEYKGPWKAKKIKNPNYKGKWKAPMIDNP) is 3 X approximate repeats. Glu-324 contributes to the an alpha-D-glucoside binding site. Residues 351 to 381 (EETWGKQKDAEKAAFEELEKKREEEETKDDP) are compositionally biased toward basic and acidic residues. Residues 351–416 (EETWGKQKDA…DKDDDQHDEL (66 aa)) are disordered. Acidic residues predominate over residues 382–400 (VESDAEDEDEAEADDSDKD). Over residues 401 to 416 (DADKSDDKDDDQHDEL) the composition is skewed to basic and acidic residues. The Prevents secretion from ER motif lies at 413 to 416 (HDEL).

It belongs to the calreticulin family.

It localises to the endoplasmic reticulum lumen. Molecular calcium-binding chaperone promoting folding, oligomeric assembly and quality control in the ER via the calreticulin/calnexin cycle. This lectin may interact transiently with almost all of the monoglucosylated glycoproteins that are synthesized in the ER. The protein is Calreticulin of Beta vulgaris (Sugar beet).